The following is a 122-amino-acid chain: MIQRGRATLLVALLLLAQLRPESSQWSPAAAAATGVQDPNLRWSPGVRNQGGGVRALLLLLAERFPRRAGSEPAGERQRRDDPPLSIDLTFHLLRTLLELARTQSQRERAEQNRIIFDSVGK.

The first 25 residues, 1–25 (MIQRGRATLLVALLLLAQLRPESSQ), serve as a signal peptide directing secretion. A propeptide spanning residues 26–80 (WSPAAAAATGVQDPNLRWSPGVRNQGGGVRALLLLLAERFPRRAGSEPAGERQRR) is cleaved from the precursor. At V120 the chain carries Valine amide.

The protein belongs to the sauvagine/corticotropin-releasing factor/urotensin I family. As to quaternary structure, interacts with CRHR1 and CRHR2 (via their N-terminal extracellular domain). As to expression, in the organ of Corti, detected in the inner hair cell region (at protein level). Expressed in skin (at protein level).

It localises to the secreted. Its function is as follows. Acts in vitro to stimulate the secretion of adrenocorticotropic hormone (ACTH). Binds with high affinity to CRF receptor types 1, 2-alpha, and 2-beta. Plays a role in the establishment of normal hearing thresholds. Reduces food intake and regulates ghrelin levels in gastric body and plasma. This Mus musculus (Mouse) protein is Urocortin (Ucn).